A 124-amino-acid polypeptide reads, in one-letter code: Large ribosomal subunit protein bL20 (124 aa).

Belongs to the bacterial ribosomal protein bL20 family.

In terms of biological role, binds directly to 23S ribosomal RNA and is necessary for the in vitro assembly process of the 50S ribosomal subunit. It is not involved in the protein synthesizing functions of that subunit. The polypeptide is Large ribosomal subunit protein bL20 (Gemmatimonas aurantiaca (strain DSM 14586 / JCM 11422 / NBRC 100505 / T-27)).